The primary structure comprises 190 residues: Potassium-transporting ATPase KdpC subunit (190 aa).

Residues 13 to 33 traverse the membrane as a helical segment; that stretch reads VGFLLLTLVCGVIYPGVVTII.

This sequence belongs to the KdpC family. In terms of assembly, the system is composed of three essential subunits: KdpA, KdpB and KdpC.

It localises to the cell membrane. In terms of biological role, part of the high-affinity ATP-driven potassium transport (or Kdp) system, which catalyzes the hydrolysis of ATP coupled with the electrogenic transport of potassium into the cytoplasm. This subunit acts as a catalytic chaperone that increases the ATP-binding affinity of the ATP-hydrolyzing subunit KdpB by the formation of a transient KdpB/KdpC/ATP ternary complex. This Listeria innocua serovar 6a (strain ATCC BAA-680 / CLIP 11262) protein is Potassium-transporting ATPase KdpC subunit.